Here is a 55-residue protein sequence, read N- to C-terminus: Large ribosomal subunit protein bL33 (55 aa).

Belongs to the bacterial ribosomal protein bL33 family.

The sequence is that of Large ribosomal subunit protein bL33 from Agrobacterium fabrum (strain C58 / ATCC 33970) (Agrobacterium tumefaciens (strain C58)).